A 244-amino-acid polypeptide reads, in one-letter code: Phosphoadenosine 5'-phosphosulfate reductase (244 aa).

Cysteine 239 acts as the Nucleophile; cysteine thiosulfonate intermediate in catalysis.

Belongs to the PAPS reductase family. CysH subfamily.

The protein localises to the cytoplasm. The enzyme catalyses [thioredoxin]-disulfide + sulfite + adenosine 3',5'-bisphosphate + 2 H(+) = [thioredoxin]-dithiol + 3'-phosphoadenylyl sulfate. The protein operates within sulfur metabolism; hydrogen sulfide biosynthesis; sulfite from sulfate: step 3/3. Functionally, catalyzes the formation of sulfite from phosphoadenosine 5'-phosphosulfate (PAPS) using thioredoxin as an electron donor. The polypeptide is Phosphoadenosine 5'-phosphosulfate reductase (Cronobacter sakazakii (strain ATCC BAA-894) (Enterobacter sakazakii)).